An 896-amino-acid chain; its full sequence is Phosphatidate phosphatase LPIN2 (896 aa).

Residues 1–108 are N-LIP; the sequence is MNYVGQLAGQ…LPAYLATSPI (108 aa). Ser-106 bears the Phosphoserine mark. A disordered region spans residues 120 to 208; the sequence is TPLVKSGGDE…SSNASLKEEE (89 aa). Residues 152–162 are compositionally biased toward basic residues; it reads VKKKKRRRKKY. Positions 153–158 match the Nuclear localization signal motif; it reads KKKKRR. Residues Ser-174, Ser-186, Ser-187, Ser-243, and Ser-303 each carry the phosphoserine modification. Disordered stretches follow at residues 370 to 405 and 420 to 459; these read AEAP…DIYL and FPKS…TECL. Basic residues predominate over residues 387–396; it reads KKKGVHKRSQ. The segment covering 426-448 has biased composition (polar residues); it reads EPGSRQWPESDTLSGSQSPQSVG. At Ser-566 the chain carries Phosphoserine. A compositionally biased stretch (basic and acidic residues) spans 569 to 579; the sequence is KQLPESKEGKS. The tract at residues 569–636 is disordered; the sequence is KQLPESKEGK…LSHGSTTSYK (68 aa). Positions 604 to 617 are enriched in acidic residues; sequence SSSDEGSQELEESI. A C-LIP region spans residues 635–837; that stretch reads YKKSLRLSSD…RIFTVNPKGE (203 aa). The short motif at 689-693 is the DXDXT motif element; sequence DIDGT. The LXXIL motif signature appears at 700–704; the sequence is LGQIL.

The protein belongs to the lipin family. Requires Mg(2+) as cofactor. As to expression, expressed in liver, lung, kidney, placenta, spleen, thymus, lymph node, prostate, testes, small intestine, and colon.

The protein resides in the nucleus. It is found in the cytoplasm. Its subcellular location is the cytosol. The protein localises to the endoplasmic reticulum membrane. It carries out the reaction a 1,2-diacyl-sn-glycero-3-phosphate + H2O = a 1,2-diacyl-sn-glycerol + phosphate. With respect to regulation, inhibited by N-ethylmaleimide. In terms of biological role, acts as a magnesium-dependent phosphatidate phosphatase enzyme which catalyzes the conversion of phosphatidic acid to diacylglycerol during triglyceride, phosphatidylcholine and phosphatidylethanolamine biosynthesis in the endoplasmic reticulum membrane. Plays important roles in controlling the metabolism of fatty acids at different levels. Also acts as a nuclear transcriptional coactivator for PPARGC1A to modulate lipid metabolism. This chain is Phosphatidate phosphatase LPIN2, found in Homo sapiens (Human).